Reading from the N-terminus, the 537-residue chain is ATP synthase subunit alpha (537 aa).

174–181 (GDRQTGKT) is a binding site for ATP.

It belongs to the ATPase alpha/beta chains family. As to quaternary structure, F-type ATPases have 2 components, CF(1) - the catalytic core - and CF(0) - the membrane proton channel. CF(1) has five subunits: alpha(3), beta(3), gamma(1), delta(1), epsilon(1). CF(0) has three main subunits: a(1), b(2) and c(9-12). The alpha and beta chains form an alternating ring which encloses part of the gamma chain. CF(1) is attached to CF(0) by a central stalk formed by the gamma and epsilon chains, while a peripheral stalk is formed by the delta and b chains.

It is found in the cell inner membrane. The catalysed reaction is ATP + H2O + 4 H(+)(in) = ADP + phosphate + 5 H(+)(out). In terms of biological role, produces ATP from ADP in the presence of a proton gradient across the membrane. The alpha chain is a regulatory subunit. This is ATP synthase subunit alpha from Verminephrobacter eiseniae (strain EF01-2).